Consider the following 174-residue polypeptide: Thiol-disulfide oxidoreductase ResA (174 aa).

Residues 11 to 30 traverse the membrane as a helical; Signal-anchor for type II membrane protein segment; sequence TAILLVLLAAIGYTIYTNFF. The Thioredoxin domain occupies 36–174; it reads VAVGSTAPDF…IERHLESIKP (139 aa). Residues Cys74 and Cys77 are joined by a disulfide bond.

The protein belongs to the thioredoxin family. ResA subfamily.

The protein localises to the cell membrane. The protein operates within protein modification; cytochrome c assembly. In terms of biological role, thiol-disulfide oxidoreductase which is required in disulfide reduction during c-type cytochrome synthesis. May accept reducing equivalents from CcdA, leading to breakage of disulfide bonds in apocytochrome c; following this reduction heme can be covalently attached. The polypeptide is Thiol-disulfide oxidoreductase ResA (Geobacillus kaustophilus (strain HTA426)).